Here is a 665-residue protein sequence, read N- to C-terminus: Potassium-transporting ATPase ATP-binding subunit (665 aa).

The next 4 helical transmembrane spans lie at 28–48 (MFLT…PGFF), 56–76 (YLQF…FSSM), 207–227 (IALT…TASI), and 244–264 (IVLL…AIGI). Asp295 acts as the 4-aspartylphosphate intermediate in catalysis. ATP-binding positions include Asp332, Glu336, 364–371 (FSSETKYS), and Lys382. The Mg(2+) site is built by Asp501 and Asp505. Transmembrane regions (helical) follow at residues 570-590 (YFVI…VNVL), 596-616 (IVAV…LIPL), and 644-664 (VVVP…LGVV).

It belongs to the cation transport ATPase (P-type) (TC 3.A.3) family. Type IA subfamily. The system is composed of three essential subunits: KdpA, KdpB and KdpC.

The protein resides in the cell membrane. The enzyme catalyses K(+)(out) + ATP + H2O = K(+)(in) + ADP + phosphate + H(+). Its function is as follows. Part of the high-affinity ATP-driven potassium transport (or Kdp) system, which catalyzes the hydrolysis of ATP coupled with the electrogenic transport of potassium into the cytoplasm. This subunit is responsible for energy coupling to the transport system and for the release of the potassium ions to the cytoplasm. This is Potassium-transporting ATPase ATP-binding subunit from Thermoplasma acidophilum (strain ATCC 25905 / DSM 1728 / JCM 9062 / NBRC 15155 / AMRC-C165).